The primary structure comprises 318 residues: Trans-prenyltransferase (318 aa).

Residues 1 to 21 traverse the membrane as a helical segment; that stretch reads MLHLIYISIIVVLIIILISYT. 3 residues coordinate isopentenyl diphosphate: Lys85, Arg88, and His122. Asp129 and Asp135 together coordinate Mg(2+). Arg140 contributes to the dimethylallyl diphosphate binding site. Arg141 lines the isopentenyl diphosphate pocket. The dimethylallyl diphosphate site is built by Lys216, Thr217, and Gln254.

The protein belongs to the FPP/GGPP synthase family. Asfivirus trans-prenyltransferase subfamily. The cofactor is Mg(2+).

The protein resides in the host endoplasmic reticulum. It localises to the host membrane. It catalyses the reaction isopentenyl diphosphate + dimethylallyl diphosphate = (2E)-geranyl diphosphate + diphosphate. It carries out the reaction isopentenyl diphosphate + (2E)-geranyl diphosphate = (2E,6E)-farnesyl diphosphate + diphosphate. The enzyme catalyses isopentenyl diphosphate + (2E,6E)-farnesyl diphosphate = (2E,6E,10E)-geranylgeranyl diphosphate + diphosphate. The catalysed reaction is isopentenyl diphosphate + (2E,6E,10E)-geranylgeranyl diphosphate = (2E,6E,10E,14E)-geranylfarnesyl diphosphate + diphosphate. It functions in the pathway isoprenoid biosynthesis; farnesyl diphosphate biosynthesis; farnesyl diphosphate from geranyl diphosphate and isopentenyl diphosphate: step 1/1. Its pathway is isoprenoid biosynthesis; geranyl diphosphate biosynthesis; geranyl diphosphate from dimethylallyl diphosphate and isopentenyl diphosphate: step 1/1. The protein operates within isoprenoid biosynthesis; geranylgeranyl diphosphate biosynthesis; geranylgeranyl diphosphate from farnesyl diphosphate and isopentenyl diphosphate: step 1/1. Trans-prenyltransferase that catalyzes the sequential condensation of isopentenyl diphosphate (IPP) with different allylic diphosphates, such as dimethylallyl diphosphate (DMAPP), geranyl diphosphate (GPP), farnesyl diphosphate (FPP) and geranylgeranyl diphosphate (GGPP), farnesyl diphosphate being the best allylic substrate. This African swine fever virus (isolate Tick/Malawi/Lil 20-1/1983) (ASFV) protein is Trans-prenyltransferase.